Consider the following 125-residue polypeptide: Small ribosomal subunit protein mS41 (125 aa).

Residues 1–10 (MLSIFGCVRA) constitute a mitochondrion transit peptide. The interval 103 to 125 (SFFGGERNRKATVAKWRAEQRNK) is disordered.

The protein belongs to the mitochondrion-specific ribosomal protein mS41 family.

Its subcellular location is the mitochondrion. Its function is as follows. Involved in telomere length regulation. The sequence is that of Small ribosomal subunit protein mS41 (FYV4) from Candida glabrata (strain ATCC 2001 / BCRC 20586 / JCM 3761 / NBRC 0622 / NRRL Y-65 / CBS 138) (Yeast).